A 395-amino-acid polypeptide reads, in one-letter code: MKRFLLCSFALVLLYPAGIDMYLVGLPRIAADLNASEAQLHIAFSVYLAGMATAMLFAGKIADQSGRKPVAIVGALVFMTASLLCSRASEGSLFLSGRFLQGVGAGGCYVVAFAILRDTLDEHRRAKVLSLLNGITCIVPVLAPVMGHLIMLRFPWQSLFYTMSAMGIIVGLLSLFILRETRPARLAPRDLSRSSPAAESLVNRFFVSRLAITTLSVSVILTFVNASPVLLMEVMGFSRGDYAITMALTAGVSMVVSFSTPFALGLFKPRTLMLVSQGLFLTAGVTLSLAHTNTVTLFGLTLICAGFSVGFGVAMSQALGPFSLRAGVASSTLGIAQVCGSSLWIWLAAILGISAMNMLIGILIGCSIVSILLIFSVTPNRSVAEHEEIPYQSRS.

The next 12 helical transmembrane spans lie at 4-24, 42-62, 69-89, 93-113, 131-151, 158-178, 217-237, 247-267, 271-291, 295-315, 328-350, and 355-377; these read FLLC…MYLV, IAFS…GKIA, PVAI…SRAS, LFLS…VVAF, LLNG…HLIM, SLFY…LFIL, VSVI…VMGF, ALTA…LGLF, TLML…SLAH, VTLF…GVAM, VASS…LAAI, and AMNM…IFSV.

The protein belongs to the major facilitator superfamily. DHA1 family. MdtL (TC 2.A.1.2.22) subfamily.

The protein resides in the cell inner membrane. The chain is Multidrug resistance protein MdtL from Salmonella schwarzengrund (strain CVM19633).